The chain runs to 127 residues: Small ribosomal subunit protein uS12 (127 aa).

Residues 11–20 are compositionally biased toward basic residues; the sequence is GRKPKKKKSK. The interval 11 to 30 is disordered; sequence GRKPKKKKSKAPALQGNPQK. At aspartate 89 the chain carries 3-methylthioaspartic acid. A disordered region spans residues 105–127; it reads AGVEGRRQSRSKYGAKRPKDQKK. Residues 112–127 show a composition bias toward basic residues; the sequence is QSRSKYGAKRPKDQKK.

It belongs to the universal ribosomal protein uS12 family. In terms of assembly, part of the 30S ribosomal subunit. Contacts proteins S8 and S17. May interact with IF1 in the 30S initiation complex.

With S4 and S5 plays an important role in translational accuracy. In terms of biological role, interacts with and stabilizes bases of the 16S rRNA that are involved in tRNA selection in the A site and with the mRNA backbone. Located at the interface of the 30S and 50S subunits, it traverses the body of the 30S subunit contacting proteins on the other side and probably holding the rRNA structure together. The combined cluster of proteins S8, S12 and S17 appears to hold together the shoulder and platform of the 30S subunit. The sequence is that of Small ribosomal subunit protein uS12 from Thermotoga maritima (strain ATCC 43589 / DSM 3109 / JCM 10099 / NBRC 100826 / MSB8).